The chain runs to 460 residues: Cysteine--tRNA ligase (460 aa).

Cys-29 is a binding site for Zn(2+). The 'HIGH' region signature appears at 31–41 (MTVYDYMHIGH). Zn(2+) contacts are provided by Cys-210, His-235, and Glu-239. Residues 267-271 (KMSKS) carry the 'KMSKS' region motif. Lys-270 is a binding site for ATP.

It belongs to the class-I aminoacyl-tRNA synthetase family. Monomer. The cofactor is Zn(2+).

It is found in the cytoplasm. The catalysed reaction is tRNA(Cys) + L-cysteine + ATP = L-cysteinyl-tRNA(Cys) + AMP + diphosphate. This chain is Cysteine--tRNA ligase, found in Coxiella burnetii (strain RSA 493 / Nine Mile phase I).